The following is a 227-amino-acid chain: Adapter protein MecA 1 (227 aa).

This sequence belongs to the MecA family. As to quaternary structure, homodimer.

Enables the recognition and targeting of unfolded and aggregated proteins to the ClpC protease or to other proteins involved in proteolysis. Acts negatively in the development of competence by binding ComK and recruiting it to the ClpCP protease. When overexpressed, inhibits sporulation. Also involved in Spx degradation by ClpC. The polypeptide is Adapter protein MecA 1 (mecA1) (Bacillus anthracis).